Here is a 63-residue protein sequence, read N- to C-terminus: Hyphancin-3F (63 aa).

Positions 1–22 (MNFSRILFFVFACFVALASVSA) are cleaved as a signal peptide. A propeptide spans 23-26 (APEP) (removed by a dipeptidylpeptidase). Leucine 61 carries the post-translational modification Leucine amide.

Belongs to the cecropin family.

Its subcellular location is the secreted. Functionally, has antibacterial activity. The polypeptide is Hyphancin-3F (Hyphantria cunea (Fall webworm moth)).